Here is a 252-residue protein sequence, read N- to C-terminus: Octanoyltransferase (252 aa).

The 182-residue stretch at 56–237 (ADTGDEIWLV…RLIANLDGAS (182 aa)) folds into the BPL/LPL catalytic domain. Substrate contacts are provided by residues 96–103 (RGGQITYH), 168–170 (ALG), and 181–183 (GLS). The active-site Acyl-thioester intermediate is the cysteine 199.

Belongs to the LipB family.

The protein localises to the cytoplasm. It catalyses the reaction octanoyl-[ACP] + L-lysyl-[protein] = N(6)-octanoyl-L-lysyl-[protein] + holo-[ACP] + H(+). The protein operates within protein modification; protein lipoylation via endogenous pathway; protein N(6)-(lipoyl)lysine from octanoyl-[acyl-carrier-protein]: step 1/2. Catalyzes the transfer of endogenously produced octanoic acid from octanoyl-acyl-carrier-protein onto the lipoyl domains of lipoate-dependent enzymes. Lipoyl-ACP can also act as a substrate although octanoyl-ACP is likely to be the physiological substrate. This is Octanoyltransferase from Burkholderia lata (strain ATCC 17760 / DSM 23089 / LMG 22485 / NCIMB 9086 / R18194 / 383).